We begin with the raw amino-acid sequence, 300 residues long: Small ribosomal subunit protein uS2 (300 aa).

The disordered stretch occupies residues 269–300 (WEADGADWAASSAAAPAESWAAEAQGAEGAKW).

It belongs to the universal ribosomal protein uS2 family. Component of the small ribosomal subunit. Mature ribosomes consist of a small (40S) and a large (60S) subunit. The 40S subunit contains about 33 different proteins and 1 molecule of RNA (18S). The 60S subunit contains about 49 different proteins and 3 molecules of RNA (25S, 5.8S and 5S). Interacts with rps21.

The protein localises to the cytoplasm. Its function is as follows. Required for the assembly and/or stability of the 40S ribosomal subunit. Required for the processing of the 20S rRNA-precursor to mature 18S rRNA in a late step of the maturation of 40S ribosomal subunits. In Aspergillus terreus (strain NIH 2624 / FGSC A1156), this protein is Small ribosomal subunit protein uS2 (rps0).